The primary structure comprises 459 residues: Cysteine--tRNA ligase (459 aa).

Cys-31 is a Zn(2+) binding site. The 'HIGH' region motif lies at 33-43 (PTVYDNPHIGN). Residues Cys-216, His-241, and Glu-245 each contribute to the Zn(2+) site. Positions 274-278 (KMSKS) match the 'KMSKS' region motif. ATP is bound at residue Lys-277.

This sequence belongs to the class-I aminoacyl-tRNA synthetase family. Monomer. Requires Zn(2+) as cofactor.

The protein localises to the cytoplasm. The enzyme catalyses tRNA(Cys) + L-cysteine + ATP = L-cysteinyl-tRNA(Cys) + AMP + diphosphate. This is Cysteine--tRNA ligase from Rickettsia massiliae (strain Mtu5).